The following is a 355-amino-acid chain: UDP-N-acetylglucosamine--N-acetylmuramyl-(pentapeptide) pyrophosphoryl-undecaprenol N-acetylglucosamine transferase (355 aa).

UDP-N-acetyl-alpha-D-glucosamine-binding positions include 15–17 (TGG), Asn-127, Arg-163, Ser-191, Ile-244, 263–268 (ALTVSE), and Gln-288.

Belongs to the glycosyltransferase 28 family. MurG subfamily.

Its subcellular location is the cell inner membrane. It catalyses the reaction di-trans,octa-cis-undecaprenyl diphospho-N-acetyl-alpha-D-muramoyl-L-alanyl-D-glutamyl-meso-2,6-diaminopimeloyl-D-alanyl-D-alanine + UDP-N-acetyl-alpha-D-glucosamine = di-trans,octa-cis-undecaprenyl diphospho-[N-acetyl-alpha-D-glucosaminyl-(1-&gt;4)]-N-acetyl-alpha-D-muramoyl-L-alanyl-D-glutamyl-meso-2,6-diaminopimeloyl-D-alanyl-D-alanine + UDP + H(+). Its pathway is cell wall biogenesis; peptidoglycan biosynthesis. Cell wall formation. Catalyzes the transfer of a GlcNAc subunit on undecaprenyl-pyrophosphoryl-MurNAc-pentapeptide (lipid intermediate I) to form undecaprenyl-pyrophosphoryl-MurNAc-(pentapeptide)GlcNAc (lipid intermediate II). The protein is UDP-N-acetylglucosamine--N-acetylmuramyl-(pentapeptide) pyrophosphoryl-undecaprenol N-acetylglucosamine transferase of Shigella boydii serotype 18 (strain CDC 3083-94 / BS512).